Consider the following 131-residue polypeptide: Aspartate 1-decarboxylase (131 aa).

Ser-25 (schiff-base intermediate with substrate; via pyruvic acid) is an active-site residue. Ser-25 carries the pyruvic acid (Ser) modification. Substrate is bound at residue Thr-57. The active-site Proton donor is Tyr-58. 73–75 (GAA) is a binding site for substrate.

This sequence belongs to the PanD family. In terms of assembly, heterooctamer of four alpha and four beta subunits. Requires pyruvate as cofactor. In terms of processing, is synthesized initially as an inactive proenzyme, which is activated by self-cleavage at a specific serine bond to produce a beta-subunit with a hydroxyl group at its C-terminus and an alpha-subunit with a pyruvoyl group at its N-terminus.

It localises to the cytoplasm. It carries out the reaction L-aspartate + H(+) = beta-alanine + CO2. Its pathway is cofactor biosynthesis; (R)-pantothenate biosynthesis; beta-alanine from L-aspartate: step 1/1. Catalyzes the pyruvoyl-dependent decarboxylation of aspartate to produce beta-alanine. The protein is Aspartate 1-decarboxylase of Chlorobium phaeobacteroides (strain DSM 266 / SMG 266 / 2430).